The primary structure comprises 119 residues: MTQQGAALQNYNNELVKCIEELCQKREELCRQIQQEEDEKQRLQNEVRQLTEKLARVNENLARKIASRNEFDRTIAETEAAYLKILESSQTLLSVLKREAGNLTKATASDQKSSGGKDS.

Position 2 is an N-acetylthreonine (Thr2). The interval Thr2 to Gln32 is important for localization to the centrosome. A coiled-coil region spans residues Asn13 to Glu70.

Belongs to the SSNA1 family. In terms of assembly, self-associates to form fibrils. Also forms dimers as well as monomers. Interacts with SPAST.

It localises to the nucleus. The protein localises to the cytoplasm. The protein resides in the cytoskeleton. It is found in the microtubule organizing center. Its subcellular location is the centrosome. It localises to the centriole. The protein localises to the midbody. The protein resides in the flagellum basal body. It is found in the flagellum axoneme. Its subcellular location is the cell projection. It localises to the axon. Microtubule-binding protein which stabilizes dynamic microtubules by slowing growth and shrinkage at both plus and minus ends and serves as a sensor of microtubule damage, protecting microtubules from the microtubule-severing enzyme SPAST. Induces microtubule branching which is mediated by the formation of long SSNA1 fibrils which guide microtubule protofilaments to split apart from the mother microtubule and form daughter microtubules. Plays a role in axon outgrowth and branching. Required for cell division. The polypeptide is Microtubule nucleation factor SSNA1 (Mus musculus (Mouse)).